A 239-amino-acid chain; its full sequence is Purine nucleoside phosphorylase DeoD-type (239 aa).

His5 serves as a coordination point for a purine D-ribonucleoside. Residues Gly21 and Arg25 each contribute to the phosphate site. Lys27 bears the N6-acetyllysine mark. Residues Arg44 and 88–91 each bind phosphate; that span reads RVGS. Residues 180 to 182 and 204 to 205 each bind a purine D-ribonucleoside; these read EME and SD. Asp205 (proton donor) is an active-site residue.

The protein belongs to the PNP/UDP phosphorylase family. As to quaternary structure, homohexamer; trimer of homodimers.

It catalyses the reaction a purine D-ribonucleoside + phosphate = a purine nucleobase + alpha-D-ribose 1-phosphate. The enzyme catalyses a purine 2'-deoxy-D-ribonucleoside + phosphate = a purine nucleobase + 2-deoxy-alpha-D-ribose 1-phosphate. In terms of biological role, catalyzes the reversible phosphorolytic breakdown of the N-glycosidic bond in the beta-(deoxy)ribonucleoside molecules, with the formation of the corresponding free purine bases and pentose-1-phosphate. The sequence is that of Purine nucleoside phosphorylase DeoD-type from Shigella dysenteriae serotype 1 (strain Sd197).